A 338-amino-acid chain; its full sequence is Cytosolic sulfotransferase 16 (338 aa).

81-86 contributes to the 3'-phosphoadenylyl sulfate binding site; the sequence is KTGTTW. The active-site Proton acceptor is histidine 143. 3'-phosphoadenylyl sulfate contacts are provided by residues arginine 165, serine 173, tyrosine 231, and 301–303; that span reads RKG.

This sequence belongs to the sulfotransferase 1 family. As to expression, highly expressed in roots, stems and mature leaves. Low expression in young leaves and flowers. Barely detected in siliques.

The protein localises to the cytoplasm. It catalyses the reaction (Z)-desulfoglucotropeolin + 3'-phosphoadenylyl sulfate = (Z)-glucotropeolin + adenosine 3',5'-bisphosphate + H(+). The enzyme catalyses (Z)-indolylmethyl desulfoglucosinolate + 3'-phosphoadenylyl sulfate = (Z)-glucobrassicin + adenosine 3',5'-bisphosphate + H(+). Its activity is regulated as follows. Inhibited by phosphoadenosine 5'-phosphate (PAP). Its function is as follows. Sulfotransferase that utilizes 3'-phospho-5'-adenylyl sulfate (PAPS) as sulfonate donor to catalyze the sulfate conjugation of desulfo-glucosinolates (dsGSs), the final step in the biosynthesis of the glucosinolate core structure. Substrate preference is desulfo-2-phenylethyl glucosinolate &gt; desulfo-indol-3-yl methyl glucosinolate &gt; desulfo-benzyl glucosinolate &gt; desulfo-6-methylthiohexyl glucosinolate &gt; desulfo-4-methylthiobutyl glucosinolate &gt; desulfo-3-methylthiopropyl glucosinolate &gt; desulfo-singrin &gt; desulfo-3-butenyl glucosinolate. The protein is Cytosolic sulfotransferase 16 (SOT16) of Arabidopsis thaliana (Mouse-ear cress).